We begin with the raw amino-acid sequence, 29 residues long: Cytochrome b6-f complex subunit 8 (29 aa).

The helical transmembrane segment at 3-23 (IISIGWVSLMVVFTFSISLVV) threads the bilayer.

It belongs to the PetN family. The 4 large subunits of the cytochrome b6-f complex are cytochrome b6, subunit IV (17 kDa polypeptide, PetD), cytochrome f and the Rieske protein, while the 4 small subunits are PetG, PetL, PetM and PetN. The complex functions as a dimer.

It is found in the plastid. Its subcellular location is the chloroplast thylakoid membrane. In terms of biological role, component of the cytochrome b6-f complex, which mediates electron transfer between photosystem II (PSII) and photosystem I (PSI), cyclic electron flow around PSI, and state transitions. The chain is Cytochrome b6-f complex subunit 8 from Staurastrum punctulatum (Green alga).